The primary structure comprises 515 residues: Vacuolar fusion protein CCZ1 homolog A (515 aa).

It belongs to the CCZ1 family. In terms of assembly, interacts with MON1.

The protein resides in the endosome. Its subcellular location is the prevacuolar compartment. In terms of biological role, plays an important role in membrane trafficking through the secretory apparatus. In complex with MON1, acts as a guanine exchange factor (GEF) for RABG3F of the Rab7 protein family. Promotes the exchange of GDP to GTP, converting RABG3F from an inactive GDP-bound form into an active GTP-bound form. The RABG3F active form is involved in protein trafficking from prevacuolar compartments (PVCs) to vacuoles. May serve as a linker between Rab5 and Rab7 protein families in PVCs and mediate PVC maturation. The chain is Vacuolar fusion protein CCZ1 homolog A from Arabidopsis thaliana (Mouse-ear cress).